A 1214-amino-acid polypeptide reads, in one-letter code: Spliceosome-associated protein 130 A (1214 aa).

The segment at 817–848 is disordered; the sequence is AGGVGENGNGNADQMENGADDEDKEDPLSDEQ. The span at 834–845 shows a compositional bias: acidic residues; sequence GADDEDKEDPLS.

This sequence belongs to the RSE1 family. Identified in the spliceosome C complex. Component of the U11/U12 snRNPs that are part of the U12-type spliceosome. Component of splicing factor SF3B complex. In terms of tissue distribution, expressed at low levels in roots, leaves, inflorescence and, to a lower extent, in siliques.

It localises to the nucleus. In terms of biological role, subunit of the splicing factor SF3B required for 'A' complex assembly formed by the stable binding of U2 snRNP to the branchpoint sequence (BPS) in pre-mRNA. Sequence independent binding of SF3A/SF3B complex upstream of the branch site is essential, it may anchor U2 snRNP to the pre-mRNA. May also be involved in the assembly of the 'E' complex. Also belongs to the minor U12-dependent spliceosome, which is involved in the splicing of rare class of nuclear pre-mRNA intron. Required for pollen and ovule development, especially during the transition from microspore to the bicellular stage in pollen development. Involved in the accumulation of QRT1 and QRT3. This is Spliceosome-associated protein 130 A from Arabidopsis thaliana (Mouse-ear cress).